A 345-amino-acid polypeptide reads, in one-letter code: Protein-arginine kinase (345 aa).

A Phosphagen kinase C-terminal domain is found at 15–245; that stretch reads LVISSRIRLA…LQIINQEIIS (231 aa). ATP-binding positions include 18 to 22, His82, Arg116, 167 to 171, and 198 to 203; these read SSRIR, RASVM, and RGLYGE. The RDXXRA motif of the pArg binding pocket involved in allosteric regulation signature appears at 328–333; it reads RDFNRA.

Belongs to the ATP:guanido phosphotransferase family.

It catalyses the reaction L-arginyl-[protein] + ATP = N(omega)-phospho-L-arginyl-[protein] + ADP + H(+). Appears to be allosterically activated by the binding of pArg-containing polypeptides to the pArg-binding pocket localized in the C-terminal domain of McsB. Catalyzes the specific phosphorylation of arginine residues in proteins. This is Protein-arginine kinase from Clostridium kluyveri (strain NBRC 12016).